A 147-amino-acid polypeptide reads, in one-letter code: Protein LOL1 (147 aa).

Positions methionine 1–serine 38 are disordered. The segment covering serine 22–serine 38 has biased composition (polar residues). The tract at residues glutamine 47 to valine 77 is putative zinc finger.

The protein localises to the nucleus. Its function is as follows. Putative zinc finger that may be involved in programmed cell death and defense response. This Oryza sativa subsp. japonica (Rice) protein is Protein LOL1 (LOL1).